A 168-amino-acid polypeptide reads, in one-letter code: Endoribonuclease YbeY (168 aa).

Zn(2+) is bound by residues His123, His127, and His133.

The protein belongs to the endoribonuclease YbeY family. The cofactor is Zn(2+).

The protein localises to the cytoplasm. Its function is as follows. Single strand-specific metallo-endoribonuclease involved in late-stage 70S ribosome quality control and in maturation of the 3' terminus of the 16S rRNA. The chain is Endoribonuclease YbeY from Francisella tularensis subsp. tularensis (strain SCHU S4 / Schu 4).